Reading from the N-terminus, the 427-residue chain is MRYSNSEKAMAKAEELMPGGVNSPVRAFKSVDTPAIFMDHGEGSRIYDIDGNEYIDYVLSWGPLILGHKNKQVIEKIHEAVDKGTSFGASTLQENKLAELVIERVPSIEKVRMVSSGTEATLDTLRLARGYTGRNKIVKFVGCYHGHSDSLLIKAGSGVATLGLPDSPGVPEGIAKNTITVPYNDLDAIKVAFEEFGDDIAGVIVEPVAGNMGVVPPVEGFLQGLRDITTAYGSLLIFDEVMTGFRVGYNCAQGYFDVTPDLTCLGKVIGGGLPVGAFGGKKEIMDQIAPTGDIYQAGTLSGNPLAMTSGYETLSQLTPETYDYFNKLGDLLEQGLKDVFAKHNVPITVNRAGSMIGYFLNAGPVTNFEQANNSDLEMFSQMYREMAKEGVFLPPSQFEGTFLSTSHTEEDINKTIQAFDTALSRIV.

Lys267 carries the N6-(pyridoxal phosphate)lysine modification.

The protein belongs to the class-III pyridoxal-phosphate-dependent aminotransferase family. HemL subfamily. In terms of assembly, homodimer. Pyridoxal 5'-phosphate serves as cofactor.

The protein localises to the cytoplasm. It catalyses the reaction (S)-4-amino-5-oxopentanoate = 5-aminolevulinate. Its pathway is porphyrin-containing compound metabolism; protoporphyrin-IX biosynthesis; 5-aminolevulinate from L-glutamyl-tRNA(Glu): step 2/2. The polypeptide is Glutamate-1-semialdehyde 2,1-aminomutase 2 (Staphylococcus saprophyticus subsp. saprophyticus (strain ATCC 15305 / DSM 20229 / NCIMB 8711 / NCTC 7292 / S-41)).